Consider the following 598-residue polypeptide: Movement protein Hsp70h (598 aa).

This sequence belongs to the heat shock protein 70 family. In terms of assembly, homomultimer. Interacts with p20. This interaction allows the docking of the latter to the virion.

The protein localises to the virion. It localises to the host cell junction. The protein resides in the host plasmodesma. Functionally, transports viral genome to neighboring plant cells directly through plasmosdesmata, without any budding. The movement protein allows efficient cell to cell propagation, by bypassing the host cell wall barrier. Two movement proteins, p6, Hsp70h and three structural proteins, CP, CPm, and P64 are essential for cell-cell movement. Also plays a role in virion formation. Together with CPm and p64, encapsidates the 5'-terminal portion of the viral genome. This is Movement protein Hsp70h from Beta vulgaris (Sugar beet).